The sequence spans 409 residues: Serine/threonine transporter SstT (409 aa).

A run of 9 helical transmembrane segments spans residues 14-34 (GNLI…GFIA), 57-77 (GALK…SIII), 89-109 (IIIL…VVSF), 149-169 (AISS…GIAL), 190-210 (IVKF…ATSV), 224-244 (LLLV…AAIV), 296-316 (ISIP…IAVL), 338-358 (IIAA…LMLI), and 365-385 (FGIS…IGVV).

It belongs to the dicarboxylate/amino acid:cation symporter (DAACS) (TC 2.A.23) family.

Its subcellular location is the cell inner membrane. It carries out the reaction L-serine(in) + Na(+)(in) = L-serine(out) + Na(+)(out). The catalysed reaction is L-threonine(in) + Na(+)(in) = L-threonine(out) + Na(+)(out). Involved in the import of serine and threonine into the cell, with the concomitant import of sodium (symport system). The protein is Serine/threonine transporter SstT of Campylobacter fetus subsp. fetus (strain 82-40).